The sequence spans 58 residues: Temporin-1Th (58 aa).

The first 22 residues, 1 to 22 (MFTLKKSLLLLFFLGTINLSLC), serve as a signal peptide directing secretion. The propeptide occupies 23-46 (EEERNAEEERRDEPDERDVQVEKR). A disordered region spans residues 25-46 (ERNAEEERRDEPDERDVQVEKR). Leu-56 bears the Leucine amide mark.

Expressed by the skin glands.

It localises to the secreted. Functionally, antimicrobial peptide that renders both the outer and inner membrane of bacteria permeable to hydrophobic substances of low molecular mass. This Rana temporaria (European common frog) protein is Temporin-1Th.